Here is an 875-residue protein sequence, read N- to C-terminus: Valine--tRNA ligase (875 aa).

The short motif at 41–51 (PNVTGSLHMGH) is the 'HIGH' region element. The short motif at 525–529 (KMSKS) is the 'KMSKS' region element. ATP is bound at residue lysine 528. A coiled-coil region spans residues 810 to 875 (VDLELIKKNL…ERISITIKGL (66 aa)).

This sequence belongs to the class-I aminoacyl-tRNA synthetase family. ValS type 1 subfamily. As to quaternary structure, monomer.

The protein resides in the cytoplasm. It catalyses the reaction tRNA(Val) + L-valine + ATP = L-valyl-tRNA(Val) + AMP + diphosphate. Catalyzes the attachment of valine to tRNA(Val). As ValRS can inadvertently accommodate and process structurally similar amino acids such as threonine, to avoid such errors, it has a 'posttransfer' editing activity that hydrolyzes mischarged Thr-tRNA(Val) in a tRNA-dependent manner. In Pelagibacter ubique (strain HTCC1062), this protein is Valine--tRNA ligase.